Consider the following 299-residue polypeptide: Regucalcin (299 aa).

E18 contacts a divalent metal cation. Substrate-binding residues include R101, N103, and E121. K144 is subject to N6-succinyllysine. The a divalent metal cation site is built by N154 and D204. Residue D204 is the Proton donor/acceptor of the active site. 2 positions are modified to N6-succinyllysine: K244 and K253.

It belongs to the SMP-30/CGR1 family. In terms of assembly, monomer. The cofactor is Zn(2+). Requires Mn(2+) as cofactor. Ca(2+) serves as cofactor. It depends on Mg(2+) as a cofactor.

It is found in the cytoplasm. It carries out the reaction D-glucono-1,5-lactone + H2O = D-gluconate + H(+). Gluconolactonase with low activity towards other sugar lactones, including gulonolactone and galactonolactone. Can also hydrolyze diisopropyl phosphorofluoridate and phenylacetate (in vitro). Calcium-binding protein. Modulates Ca(2+) signaling, and Ca(2+)-dependent cellular processes and enzyme activities. This chain is Regucalcin (RGN), found in Homo sapiens (Human).